The sequence spans 109 residues: Large ribosomal subunit protein uL24 (109 aa).

The protein belongs to the universal ribosomal protein uL24 family. As to quaternary structure, part of the 50S ribosomal subunit.

Its function is as follows. One of two assembly initiator proteins, it binds directly to the 5'-end of the 23S rRNA, where it nucleates assembly of the 50S subunit. In terms of biological role, one of the proteins that surrounds the polypeptide exit tunnel on the outside of the subunit. This chain is Large ribosomal subunit protein uL24, found in Geotalea uraniireducens (strain Rf4) (Geobacter uraniireducens).